Consider the following 342-residue polypeptide: GTPase Obg (342 aa).

In terms of domain architecture, Obg spans 1 to 159 (MQFIDRAEIE…RHLRLELKLL (159 aa)). One can recognise an OBG-type G domain in the interval 160-328 (AEVGIIGLPN…LLAKVWQQLE (169 aa)). GTP is bound by residues 166-173 (GLPNAGKS), 191-195 (FTTLI), 213-216 (DIPG), 280-283 (NKID), and 309-311 (SAV). Residues Ser-173 and Thr-193 each contribute to the Mg(2+) site.

This sequence belongs to the TRAFAC class OBG-HflX-like GTPase superfamily. OBG GTPase family. Monomer. Mg(2+) serves as cofactor.

The protein resides in the cytoplasm. In terms of biological role, an essential GTPase which binds GTP, GDP and possibly (p)ppGpp with moderate affinity, with high nucleotide exchange rates and a fairly low GTP hydrolysis rate. Plays a role in control of the cell cycle, stress response, ribosome biogenesis and in those bacteria that undergo differentiation, in morphogenesis control. This Microcystis aeruginosa (strain NIES-843 / IAM M-2473) protein is GTPase Obg.